Reading from the N-terminus, the 342-residue chain is Probable dual-specificity RNA methyltransferase RlmN (342 aa).

The Proton acceptor role is filled by E91. The Radical SAM core domain occupies 97-327; sequence YKHGNSICVS…TTIRREMGAD (231 aa). Cysteines 104 and 332 form a disulfide. The [4Fe-4S] cluster site is built by C111, C115, and C118. S-adenosyl-L-methionine-binding positions include 158 to 159, S190, 213 to 215, and N289; these read GE and SLH. The S-methylcysteine intermediate role is filled by C332.

It belongs to the radical SAM superfamily. RlmN family. It depends on [4Fe-4S] cluster as a cofactor.

It localises to the cytoplasm. It carries out the reaction adenosine(2503) in 23S rRNA + 2 reduced [2Fe-2S]-[ferredoxin] + 2 S-adenosyl-L-methionine = 2-methyladenosine(2503) in 23S rRNA + 5'-deoxyadenosine + L-methionine + 2 oxidized [2Fe-2S]-[ferredoxin] + S-adenosyl-L-homocysteine. It catalyses the reaction adenosine(37) in tRNA + 2 reduced [2Fe-2S]-[ferredoxin] + 2 S-adenosyl-L-methionine = 2-methyladenosine(37) in tRNA + 5'-deoxyadenosine + L-methionine + 2 oxidized [2Fe-2S]-[ferredoxin] + S-adenosyl-L-homocysteine. Functionally, specifically methylates position 2 of adenine 2503 in 23S rRNA and position 2 of adenine 37 in tRNAs. This chain is Probable dual-specificity RNA methyltransferase RlmN, found in Clostridium botulinum (strain Okra / Type B1).